Reading from the N-terminus, the 229-residue chain is Urease accessory protein UreF (229 aa).

This sequence belongs to the UreF family. As to quaternary structure, ureD, UreF and UreG form a complex that acts as a GTP-hydrolysis-dependent molecular chaperone, activating the urease apoprotein by helping to assemble the nickel containing metallocenter of UreC. The UreE protein probably delivers the nickel.

The protein resides in the cytoplasm. Its function is as follows. Required for maturation of urease via the functional incorporation of the urease nickel metallocenter. The polypeptide is Urease accessory protein UreF (Trichormus variabilis (strain ATCC 29413 / PCC 7937) (Anabaena variabilis)).